Here is a 64-residue protein sequence, read N- to C-terminus: Large ribosomal subunit protein bL35 (64 aa).

The protein belongs to the bacterial ribosomal protein bL35 family.

The polypeptide is Large ribosomal subunit protein bL35 (Amoebophilus asiaticus (strain 5a2)).